Reading from the N-terminus, the 123-residue chain is Small ribosomal subunit protein uS12cz/uS12cy (123 aa).

Belongs to the universal ribosomal protein uS12 family. Part of the 30S ribosomal subunit.

Its subcellular location is the plastid. The protein resides in the chloroplast. With S4 and S5 plays an important role in translational accuracy. Located at the interface of the 30S and 50S subunits. The chain is Small ribosomal subunit protein uS12cz/uS12cy (rps12-A) from Drimys granadensis.